The chain runs to 349 residues: Ribosomal RNA large subunit methyltransferase Cfr (349 aa).

Catalysis depends on E89, which acts as the Proton acceptor. The Radical SAM core domain maps to 96–331; it reads KAGWESFCIS…VTVRSQFGID (236 aa). C103 and C336 are joined by a disulfide. Residues C110, C114, and C117 each contribute to the [4Fe-4S] cluster site. S-adenosyl-L-methionine-binding positions include 156-157, S187, 210-212, and N291; these read GE and SLH. Catalysis depends on C336, which acts as the S-methylcysteine intermediate.

Belongs to the radical SAM superfamily. RlmN family. Cfr subfamily. [4Fe-4S] cluster is required as a cofactor.

It localises to the cytoplasm. The catalysed reaction is adenosine(2503) in 23S rRNA + 2 reduced [2Fe-2S]-[ferredoxin] + 2 S-adenosyl-L-methionine = 8-methyladenosine(2503) in 23S rRNA + 5'-deoxyadenosine + L-methionine + 2 oxidized [2Fe-2S]-[ferredoxin] + S-adenosyl-L-homocysteine. In terms of biological role, specifically methylates position 8 of adenine 2503 in 23S rRNA. Confers resistance to some classes of antibiotics. The protein is Ribosomal RNA large subunit methyltransferase Cfr of Bacillus velezensis (strain DSM 23117 / BGSC 10A6 / LMG 26770 / FZB42) (Bacillus amyloliquefaciens subsp. plantarum).